The following is a 1398-amino-acid chain: Protein timeless (1398 aa).

The segment at V237 to Q268 is necessary for normal circadian rhythm. 5 disordered regions span residues E254 to R300, A322 to N452, T478 to K555, T1127 to S1147, and N1220 to T1239. Low complexity predominate over residues S273–S290. A compositionally biased stretch (gly residues) spans N291–R300. Polar residues predominate over residues M338–A355. Residues E365–H375 show a composition bias toward basic and acidic residues. Residues G376–Y390 show a composition bias toward acidic residues. Composition is skewed to polar residues over residues L400–P421, A440–N452, and Q504–S515. Positions Q522–P531 are enriched in low complexity. A Nuclear localization signal motif is present at residues K550–R560.

Belongs to the timeless family. Forms a heterodimer with period (PER); the complex then translocates into the nucleus. Post-translationally, phosphorylated with a circadian rhythmicity. In terms of tissue distribution, expressed in head, photoreceptors, lateral neurons and glial cells in the lamina and medulla of the optic lobes. Expression follows a light-dark cycle, levels show a significant decrease at the end of the night and then remain low throughout the light period (at protein level).

It localises to the nucleus. Its subcellular location is the cytoplasm. It is found in the perinuclear region. Functionally, required for the production of circadian rhythms. The biological cycle depends on the rhythmic formation and nuclear localization of the TIM-PER complex. Light induces the degradation of TIM, which promotes elimination of PER. Nuclear activity of the heterodimer coordinatively regulates PER and TIM transcription through a negative feedback loop. Behaves as a negative element in circadian transcriptional loop. Does not appear to bind DNA, suggesting indirect transcriptional inhibition. The sequence is that of Protein timeless (tim) from Drosophila melanogaster (Fruit fly).